The following is a 299-amino-acid chain: Acetylglutamate kinase (299 aa).

Substrate contacts are provided by residues 62–63 (GG), Arg-84, and Asn-188.

The protein belongs to the acetylglutamate kinase family. ArgB subfamily.

It is found in the cytoplasm. It catalyses the reaction N-acetyl-L-glutamate + ATP = N-acetyl-L-glutamyl 5-phosphate + ADP. It functions in the pathway amino-acid biosynthesis; L-arginine biosynthesis; N(2)-acetyl-L-ornithine from L-glutamate: step 2/4. In terms of biological role, catalyzes the ATP-dependent phosphorylation of N-acetyl-L-glutamate. This is Acetylglutamate kinase from Methanosarcina acetivorans (strain ATCC 35395 / DSM 2834 / JCM 12185 / C2A).